Consider the following 860-residue polypeptide: Leucine--tRNA ligase (860 aa).

Residues 42–52 (PYPSGRLHMGH) carry the 'HIGH' region motif. The 'KMSKS' region motif lies at 619–623 (KMSKS). ATP is bound at residue K622.

It belongs to the class-I aminoacyl-tRNA synthetase family.

It localises to the cytoplasm. It catalyses the reaction tRNA(Leu) + L-leucine + ATP = L-leucyl-tRNA(Leu) + AMP + diphosphate. This is Leucine--tRNA ligase from Sodalis glossinidius (strain morsitans).